The chain runs to 56 residues: Serine protease inhibitor Kazal-type 1 (56 aa).

In terms of domain architecture, Kazal-like spans 3–56 (PQREATCTSEVSGCPKIYNPVCGTDGITYSNECVLCSENKKRQTPVLIQKSGPC). Disulfide bonds link Cys-9-Cys-38, Cys-16-Cys-35, and Cys-24-Cys-56.

The protein localises to the secreted. Functionally, serine protease inhibitor which exhibits anti-trypsin activity. In the pancreas, protects against trypsin-catalyzed premature activation of zymogens. In terms of biological role, in the male reproductive tract, binds to sperm heads where it modulates sperm capacitance by inhibiting calcium uptake and nitrogen oxide (NO) production. The protein is Serine protease inhibitor Kazal-type 1 (SPINK1) of Sus scrofa (Pig).